A 102-amino-acid polypeptide reads, in one-letter code: Large ribosomal subunit protein bL21 (102 aa).

This sequence belongs to the bacterial ribosomal protein bL21 family. In terms of assembly, part of the 50S ribosomal subunit. Contacts protein L20.

Functionally, this protein binds to 23S rRNA in the presence of protein L20. The polypeptide is Large ribosomal subunit protein bL21 (Solidesulfovibrio magneticus (strain ATCC 700980 / DSM 13731 / RS-1) (Desulfovibrio magneticus)).